Here is a 124-residue protein sequence, read N- to C-terminus: Small ribosomal subunit protein uS12 (124 aa).

A 3-methylthioaspartic acid modification is found at Asp-89. A disordered region spans residues 105–124; that stretch reads SGVSDRRQGRSKYGAKRPKS. Residues 113–124 are compositionally biased toward basic residues; sequence GRSKYGAKRPKS.

The protein belongs to the universal ribosomal protein uS12 family. As to quaternary structure, part of the 30S ribosomal subunit. Contacts proteins S8 and S17. May interact with IF1 in the 30S initiation complex.

Its function is as follows. With S4 and S5 plays an important role in translational accuracy. In terms of biological role, interacts with and stabilizes bases of the 16S rRNA that are involved in tRNA selection in the A site and with the mRNA backbone. Located at the interface of the 30S and 50S subunits, it traverses the body of the 30S subunit contacting proteins on the other side and probably holding the rRNA structure together. The combined cluster of proteins S8, S12 and S17 appears to hold together the shoulder and platform of the 30S subunit. This Colwellia psychrerythraea (strain 34H / ATCC BAA-681) (Vibrio psychroerythus) protein is Small ribosomal subunit protein uS12.